The primary structure comprises 167 residues: Urease accessory protein UreE (167 aa).

The segment at 135-167 (SGAYGGGHHHSHSHHEGDEFHSKPRLHHFGGSQ) is disordered. Residues 157–167 (KPRLHHFGGSQ) are compositionally biased toward basic residues.

This sequence belongs to the UreE family.

It is found in the cytoplasm. In terms of biological role, involved in urease metallocenter assembly. Binds nickel. Probably functions as a nickel donor during metallocenter assembly. This Nitrosococcus oceani (strain ATCC 19707 / BCRC 17464 / JCM 30415 / NCIMB 11848 / C-107) protein is Urease accessory protein UreE.